The primary structure comprises 104 residues: L-rhamnose mutarotase (104 aa).

Tyr18 contributes to the substrate binding site. Residue His22 is the Proton donor of the active site. Substrate contacts are provided by residues Tyr41 and 76-77; that span reads WW.

This sequence belongs to the rhamnose mutarotase family. Homodimer.

It localises to the cytoplasm. It catalyses the reaction alpha-L-rhamnose = beta-L-rhamnose. It participates in carbohydrate metabolism; L-rhamnose metabolism. Involved in the anomeric conversion of L-rhamnose. The sequence is that of L-rhamnose mutarotase from Shigella flexneri serotype 5b (strain 8401).